A 407-amino-acid chain; its full sequence is Phosphonoacetate hydrolase (407 aa).

7 residues coordinate Zn(2+): aspartate 25, threonine 64, aspartate 202, histidine 206, aspartate 241, histidine 242, and histidine 368. Residues threonine 64 and aspartate 202 each contribute to the substrate site. The substrate site is built by histidine 242 and histidine 368.

The protein belongs to the alkaline phosphatase family. PhnA subfamily. Homodimer. Requires Zn(2+) as cofactor.

The enzyme catalyses phosphonoacetate + H2O = acetate + phosphate + H(+). Specifically hydrolyzes phosphonoacetate. Does not have activity on other organophosphonates or acetates. The polypeptide is Phosphonoacetate hydrolase (Pseudomonas cedrina).